We begin with the raw amino-acid sequence, 228 residues long: MSTHAPVITVDGPSGAGKGTLCMLLAEKLGWHLLDSGAIYRVLALAAIHHGVDLESEDVLVPLAAHLDVQFKAEGDLVKVILEGEDVSGELRKEETGMTASKVAALPRVREALLRRQRAFSNAPGLVADGRDMGTVVFPNAIVKIFLDASAEERANRRMNQLQQKGLDVNFGSLLSEIQERDDRDRNRSVAPLRPAEDALVLDSTDMSIEQVTAQAFAYIEQALEQKS.

12–20 provides a ligand contact to ATP; the sequence is GPSGAGKGT.

This sequence belongs to the cytidylate kinase family. Type 1 subfamily.

It is found in the cytoplasm. It carries out the reaction CMP + ATP = CDP + ADP. The catalysed reaction is dCMP + ATP = dCDP + ADP. The chain is Cytidylate kinase from Photobacterium profundum (strain SS9).